Reading from the N-terminus, the 309-residue chain is MSIRIIPQDELGSSEKRTADMIPPLLFPRLKNVYNRRAERLRELAENNPLGDYLRFAALIAHAQEVVLYDHPLRMDLTARIKDANDQGKPPLDIHVLPRDKHWHTLLHSMIAELKPEMSGPALAVIENLEKASEQELEQMASALFASDFASVSSDKAPLIWAALSLYWAQMASLIPGKARAEYGEARQYCPVCGSMPVSSMVQIGTTQGLRYLHCNLCETEWHVVRVKCSNCEQSRDLHYWSLENEQAAVKAESCGDCGTYLKILYQEKDPKVEAVADDLASLVLDARMEQEGFARSSINPFLFPGEGE.

This sequence belongs to the FdhE family.

Its subcellular location is the cytoplasm. Its function is as follows. Necessary for formate dehydrogenase activity. The chain is Protein FdhE from Salmonella dublin (strain CT_02021853).